Here is a 365-residue protein sequence, read N- to C-terminus: MSIEIANIKKSFGRTQVLNDISLDIPSGQMVALLGPSGSGKTTLLRIIAGLEHQTSGHIRFHGTDVSRLHARDRKVGFVFQHYALFRHMTVFDNIAFGLTVLPRRERPNAAAIKAKVTKLLEMVQLAHLADRYPAQLSGGQKQRVALARALAVEPQILLLDEPFGALDAQVRKELRRWLRQLHEELKFTSVFVTHDQEEATEVADRVVVMSQGNIEQADAPDQVWREPATRFVLEFMGEVNRLQGTIRGGQFHVGAHRWPLGYTPAYQGPVDLFLRPWEVDISRRTSLDSPLPVQVLEASPKGHYTQLVVQPLGWYNEPLTVVMHGDDAPQRGERLFVGLQHARLYNGDERIETRDEELALAQSA.

One can recognise an ABC transporter domain in the interval 3–237 (IEIANIKKSF…PATRFVLEFM (235 aa)). 35–42 (GPSGSGKT) contributes to the ATP binding site.

It belongs to the ABC transporter superfamily. Sulfate/tungstate importer (TC 3.A.1.6) family. As to quaternary structure, the complex is composed of two ATP-binding proteins (CysA), two transmembrane proteins (CysT and CysW) and a solute-binding protein (CysP).

It is found in the cell inner membrane. The catalysed reaction is sulfate(out) + ATP + H2O = sulfate(in) + ADP + phosphate + H(+). It carries out the reaction thiosulfate(out) + ATP + H2O = thiosulfate(in) + ADP + phosphate + H(+). Functionally, part of the ABC transporter complex CysAWTP involved in sulfate/thiosulfate import. Responsible for energy coupling to the transport system. The sequence is that of Sulfate/thiosulfate import ATP-binding protein CysA from Escherichia coli (strain K12).